Reading from the N-terminus, the 56-residue chain is MAVPKKKKSKSKRNQRHAVWKGKAAIAAQKAISLGKSILTGKAQGFVYPIEEEEEE.

It belongs to the bacterial ribosomal protein bL32 family.

This chain is Large ribosomal subunit protein bL32, found in Prochlorococcus marinus (strain MIT 9215).